The primary structure comprises 287 residues: mRNA-capping enzyme regulatory subunit OPG124 (287 aa).

The protein belongs to the orthopoxvirus mRNA-capping enzyme regulatory subunit family. Interacts with the late transcription elongation factor VLTF-4/OPG110. Interacts with the late transcription factors VLTF-1.

Its subcellular location is the virion. In terms of biological role, acts with RNA polymerase to initiate transcription from late gene promoters. This chain is mRNA-capping enzyme regulatory subunit OPG124 (OPG124), found in Monkeypox virus.